The primary structure comprises 238 residues: uncharacterized protein (238 aa).

Residues 1–68 enclose the HTH gntR-type domain; that stretch reads MIYKSIAERL…HGSGTYLVRK (68 aa). A DNA-binding region (H-T-H motif) is located at residues 28–47; sequence EKKLAEEFAVSRMTIRKAID.

This is an uncharacterized protein from Escherichia coli (strain K12).